We begin with the raw amino-acid sequence, 665 residues long: Prelamin-A/C (665 aa).

Residue M1 is modified to N-acetylmethionine. The tract at residues 1–25 (METPSQRRATRSGAQASSTPLSPTR) is disordered. The segment at 1–33 (METPSQRRATRSGAQASSTPLSPTRITRLQEKE) is head. The segment at 1-130 (METPSQRRAT…TKKEGDLLAA (130 aa)) is interaction with MLIP. T3 bears the Phosphothreonine mark. Position 5 is a phosphoserine (S5). Residue T10 is modified to Phosphothreonine. S12 and S18 each carry phosphoserine. The residue at position 19 (T19) is a Phosphothreonine. S22 is modified (phosphoserine). In terms of domain architecture, IF rod spans 31-387 (EKEDLQELND…KLLEGEEERL (357 aa)). K32 bears the N6-acetyllysine; alternate mark. K32 bears the N6-succinyllysine; alternate mark. Residue K32 forms a Glycyl lysine isopeptide (Lys-Gly) (interchain with G-Cter in SUMO2); alternate linkage. The segment at 34–70 (DLQELNDRLAVYIDRVRSLETENAGLRLRITESEEVV) is coil 1A. Phosphoserine occurs at positions 51, 66, and 71. The linker 1 stretch occupies residues 71–80 (SREVSGIKAA). 2 positions are modified to N6-acetyllysine: K78 and K97. The segment at 81–218 (YEAELGDARK…NIYSEELRET (138 aa)) is coil 1B. A Glycyl lysine isopeptide (Lys-Gly) (interchain with G-Cter in SUMO2) cross-link involves residue K97. The residue at position 107 (S107) is a Phosphoserine. 6 positions are modified to N6-acetyllysine: K108, K114, K123, K135, K144, and K155. K171 carries the N6-acetyllysine; alternate modification. The residue at position 171 (K171) is an N6-succinyllysine; alternate. K171 is covalently cross-linked (Glycyl lysine isopeptide (Lys-Gly) (interchain with G-Cter in SUMO2); alternate). An N6-acetyllysine mark is found at K180, K201, and K208. K201 participates in a covalent cross-link: Glycyl lysine isopeptide (Lys-Gly) (interchain with G-Cter in SUMO2); alternate. A Glycyl lysine isopeptide (Lys-Gly) (interchain with G-Cter in SUMO); alternate cross-link involves residue K201. K208 is covalently cross-linked (Glycyl lysine isopeptide (Lys-Gly) (interchain with G-Cter in SUMO2)). S212 carries the phosphoserine modification. Glycyl lysine isopeptide (Lys-Gly) (interchain with G-Cter in SUMO2) cross-links involve residues K219 and K233. The linker 2 stretch occupies residues 219 to 242 (KRRHETRLVEIDNGKQREFESRLA). K233, K260, K265, and K270 each carry N6-acetyllysine. Residues 243-383 (DALQELRAQH…HAYRKLLEGE (141 aa)) are coil 2. K260 is covalently cross-linked (Glycyl lysine isopeptide (Lys-Gly) (interchain with G-Cter in SUMO2); alternate). K270 participates in a covalent cross-link: Glycyl lysine isopeptide (Lys-Gly) (interchain with G-Cter in SUMO2); alternate. Residues S277, S282, S301, and S307 each carry the phosphoserine modification. A Glycyl lysine isopeptide (Lys-Gly) (interchain with G-Cter in SUMO2); alternate cross-link involves residue K311. An N6-acetyllysine mark is found at K311, K316, and K341. Residues K366 and K378 each participate in a glycyl lysine isopeptide (Lys-Gly) (interchain with G-Cter in SUMO2) cross-link. The tract at residues 384 to 442 (EERLRLSPSPTSQRSRGRASSHSSQSQGGGSVTKKRKLESSESRSSFSQHARTSGRVAV) is disordered. The tract at residues 384-665 (EERLRLSPSP…SQSSQNCSIM (282 aa)) is tail. A phosphoserine mark is found at S390, S392, S395, S398, S403, S404, S406, S407, S409, and S414. The residue at position 392 (S392) is a Phosphoserine; by CDK1. The span at 395 to 409 (SQRSRGRASSHSSQS) shows a compositional bias: low complexity. At T416 the chain carries Phosphothreonine. N6-acetyllysine occurs at positions 417 and 420. Glycyl lysine isopeptide (Lys-Gly) (interchain with G-Cter in SUMO2) cross-links involve residues K417 and K420. The short motif at 417 to 422 (KKRKLE) is the Nuclear localization signal element. A phosphoserine mark is found at S423, S426, S429, and S431. Residues 428–545 (SSFSQHARTS…EEVAMRKLVR (118 aa)) form the LTD domain. A Glycyl lysine isopeptide (Lys-Gly) (interchain with G-Cter in SUMO2); alternate cross-link involves residue K450. K450 and K457 each carry N6-acetyllysine. Residues S458, E460, and S463 each carry the phosphoserine modification. The residue at position 486 (K486) is an N6-acetyllysine. A Glycyl lysine isopeptide (Lys-Gly) (interchain with G-Cter in SUMO2) cross-link involves residue K486. T496 bears the Phosphothreonine mark. A Phosphoserine modification is found at S500. Phosphothreonine is present on residues T505 and T510. S533 and S546 each carry phosphoserine. T548 bears the Phosphothreonine mark. Residues 553 to 577 (NEDDDEDGEELLHHHRGSHCSGSGD) are disordered. 3 positions are modified to phosphoserine: S570, C572, and S573. K599 participates in a covalent cross-link: Glycyl lysine isopeptide (Lys-Gly) (interchain with G-Cter in SUMO2); alternate. K599 is covalently cross-linked (Glycyl lysine isopeptide (Lys-Gly) (interchain with G-Cter in SUMO1); alternate). A phosphoserine mark is found at S613, S614, S617, and S620. O-linked (GlcNAc) serine glycosylation is found at S626 and S629. Phosphoserine occurs at positions 629, 633, 637, and 653. The propeptide at 648–662 (LLGNSSPRSQSSQNC) is removed in Lamin-A/C form. C662 carries the cysteine methyl ester modification. C662 carries S-farnesyl cysteine lipidation. The propeptide at 663 to 665 (SIM) is removed in Prelamin-A/C form and in Lamin-A/C form.

Belongs to the intermediate filament family. In terms of assembly, homodimer of lamin A and lamin C. Lamin dimers then assemble into dimeric head-to-tail polymers. Ultimately, two head-to-tail polymers assemble laterally into a protofilament with a uniformly shaped rod of 3.5 nm in diameter. Interacts with lamin-associated polypeptides IA, IB and TMPO-alpha, RB1 and with emerin. Proteolytically processed isoform A interacts with NARF. Interacts with SREBF1, SREBF2, SUN1, SUN2 and TMEM43. Interacts with TMEM201. Prelamin-A/C interacts with EMD. Interacts with DMPK; may regulate nuclear envelope stability. Interacts with MLIP. Interacts with SUV39H1; the interaction increases stability of SUV39H1. Interacts with ITSN1 isoform 2. Interacts with IFFO1; the interaction forms an interior nucleoskeleton and the recruitment to DNA double-strand breaks. As to quaternary structure, interacts with EMD. Interacts (via C-terminus) with LEMD2 (via N-terminus) (in vitro). Proteolytic cleavage of the C-terminal of 18 residues of prelamin-A/C results in the production of lamin-A/C. The prelamin-A/C maturation pathway includes farnesylation of CAAX motif by protein farnesyltransferase (FNTA and FNTB), removal of the last three amino acids (-AAX) by RCE1/FACE2 and/or ZMPSTE24, methylation of the C-terminal cysteine by ICMT and endoproteolytic removal of the last 15 C-terminal amino acids by ZMPSTE24. Proteolytic cleavage requires prior farnesylation and methylation, and absence of these blocks cleavage. In terms of processing, farnesylation of prelamin-A/C facilitates nuclear envelope targeting. Post-translationally, phosphorylation plays a key role in lamin organization, subcellular localization and nuclear envelope disintegration. Phosphorylation by CDK1 at Ser-22 and Ser-392 at the onset of mitosis drives lamin disassembly and nuclear envelope breakdown. Phosphorylation at Ser-22 and Ser-392 during interphase promotes localization to the nucleoplasm and regulates lamina assembly. Phosphorylation at Ser-22, Ser-392 and Ser-629 during interphase causes redistribution between the nucleus and the cytoplasm. Phosphorylation at Ser-22 by CDK1 regulates matrix stiffness. Phosphorylation status of Ser-22 determines its localization between double-strand break (DSB) sites and the nuclear matrix. Phosphorylated by ATR at Ser-282 in response to DNA damage, leading to lamin disassembly and nuclear envelope rupture. Phosphorylation also regulates stability in micronuclei arising from genome instability: phosphorylation at Ser-395 by ATR in response to genome instability and double-stranded DNA breaks primes LMNA for subsequent phosphorylation at Ser-392 by CDK1 and micronuclei envelope rupture. The rupture of micronuclear envelope triggers the cGAS-STING pathway thereby activating the type I interferon response and innate immunity. Isoform C is phosphorylated on Ser-392, Ser-407 and Ser-409 at interphase. In terms of processing, acetylation by KAT8 is required for nuclear architecture. Post-translationally, sumoylation is necessary for the localization to the nuclear envelope. The N-terminus is blocked. Expressed in liver and in bone marrow (at protein level). Expressed in cardiomyocytes. In terms of tissue distribution, specifically expressed in germ cells.

The protein localises to the nucleus lamina. It is found in the nucleus envelope. Its subcellular location is the nucleus. The protein resides in the nucleoplasm. It localises to the nucleus matrix. Its function is as follows. Lamins are intermediate filament proteins that assemble into a filamentous meshwork, and which constitute the major components of the nuclear lamina, a fibrous layer on the nucleoplasmic side of the inner nuclear membrane. Lamins provide a framework for the nuclear envelope, bridging the nuclear envelope and chromatin, thereby playing an important role in nuclear assembly, chromatin organization, nuclear membrane and telomere dynamics. Lamin A and C also regulate matrix stiffness by conferring nuclear mechanical properties. The structural integrity of the lamina is strictly controlled by the cell cycle, as seen by the disintegration and formation of the nuclear envelope in prophase and telophase, respectively. Lamin A and C are present in equal amounts in the lamina of mammals. Also invoved in DNA repair: recruited by DNA repair proteins XRCC4 and IFFO1 to the DNA double-strand breaks (DSBs) to prevent chromosome translocation by immobilizing broken DNA ends. Required for normal development of peripheral nervous system and skeletal muscle and for muscle satellite cell proliferation. Required for osteoblastogenesis and bone formation. Also prevents fat infiltration of muscle and bone marrow, helping to maintain the volume and strength of skeletal muscle and bone. Required for cardiac homeostasis. Functionally, prelamin-A/C can accelerate smooth muscle cell senescence. It acts to disrupt mitosis and induce DNA damage in vascular smooth muscle cells (VSMCs), leading to mitotic failure, genomic instability, and premature senescence. In terms of biological role, isoform C2 may have a role in determining the organization of nuclear and chromosomal structures during spermatogenesis. The protein is Prelamin-A/C (Lmna) of Mus musculus (Mouse).